Consider the following 251-residue polypeptide: MGRMWASEVLLLLLLGSSRAVTPGLDVSTAPGLDGSIPPGLDGSVSPGLDGSVSPGLDGSASPGLDGSVSPGLDGSASPGLDGSTPAGRDGTITPKLEGTITPKQDGSISPSWPWRWPITYLDAILAAVRLLNQKISGPCILRLREAQPRPGWVGTLQRRREVSFLVEDGPCPPGVDCRSCEPGALQHCVGTVSIEQQPTAELRCRPLRPQPIRNWWIRIWEWLNGIRKRLRQRSPFYVRGHLNVTSTPQP.

The N-terminal stretch at 1-20 (MGRMWASEVLLLLLLGSSRA) is a signal peptide. A propeptide spanning residues 21–211 (VTPGLDVSTA…ELRCRPLRPQ (191 aa)) is cleaved from the precursor. The interval 29-109 (TAPGLDGSIP…TITPKQDGSI (81 aa)) is disordered. Intrachain disulfides connect Cys172/Cys181 and Cys189/Cys205.

This sequence belongs to the cathelicidin family. In terms of tissue distribution, detected in bursa of Fabricius, in filamentous structures surrounding the basal and lateral surfaces of bursal M cells (at protein level). Detected in bursa of Fabricius, in secretory enterocytes of the interfollicular bursal epithelium, but not in M cells.

It is found in the secreted. Has potent antimicrobial activity against Gram-positive and Gram-negative bacteria (in vitro). May play a role in the innate immune response. The chain is Cathelicidin-B1 (CATHB1) from Gallus gallus (Chicken).